An 895-amino-acid chain; its full sequence is Receptor-like protein kinase FERONIA (895 aa).

A signal peptide spans 1–27 (MKITEGRFRLSLLLLLLLISAATLISA). Topologically, residues 28-447 (ADYSPTEKIL…TTRKSKSNTA (420 aa)) are extracellular. N-linked (GlcNAc...) asparagine glycans are attached at residues Asn46, Asn124, Asn142, Asn171, Asn219, Asn269, Asn305, Asn330, Asn345, and Asn410. The helical transmembrane segment at 448 to 468 (IIAGAASGAVVLALIIGFCVF) threads the bilayer. Over 469 to 895 (GAYRRRKRGD…FSQIMNPKGR (427 aa)) the chain is Cytoplasmic. A Protein kinase domain is found at 536-810 (FDESRVLGVG…GDVLWNLEFA (275 aa)). ATP contacts are provided by residues 542-550 (LGVGGFGKV) and Lys565. Catalysis depends on Asp661, which acts as the Proton acceptor. The tract at residues 844–895 (NDKSSDVYEGNVTDSRSSGIDMSIGGRSLASEDSDGLTPSAVFSQIMNPKGR) is disordered. Residues Ser858, Ser866, Ser871, and Ser874 each carry the phosphoserine modification. Residues 884 to 895 (AVFSQIMNPKGR) are compositionally biased toward polar residues.

The protein belongs to the protein kinase superfamily. Ser/Thr protein kinase family. Interacts with ROPGEF1. Interacts with RALF1; triggering phosphorylation status and subsequent activation. Interacts with LRE and LLG1. Interacts, via its extracellular domain, with FERONIA at the synergid cell surface. Post-translationally, autophosphorylated. Phosphorylated at Ser-858, Ser-871 and Ser-874 upon activation by RALF1. Expressed in leaves, buds, flowers, siliques, young ovules primordia, and young anthers with immature pollen, but not detected in mature pollen. Highest expression in the synergid cells of the female gametophyte.

It localises to the cell membrane. The enzyme catalyses L-seryl-[protein] + ATP = O-phospho-L-seryl-[protein] + ADP + H(+). The catalysed reaction is L-threonyl-[protein] + ATP = O-phospho-L-threonyl-[protein] + ADP + H(+). In terms of biological role, receptor-like protein kinase that mediates the female control of male gamete delivery during fertilization, including growth cessation of compatible pollen tubes ensuring a reproductive isolation barriers, by regulating MLO7 subcellular polarization upon pollen tube perception in the female gametophyte synergids. Required for cell elongation during vegetative growth, mostly in a brassinosteroids- (BR-) independent manner. Acts as an upstream regulator for the Rac/Rop-signaling pathway that controls ROS-mediated root hair development. Seems to regulate a cross-talk between brassinosteroids and ethylene signaling pathways during hypocotyl elongation. Negative regulator of brassinosteroid response in light-grown hypocotyls, but required for brassinosteroid response in etiolated seedlings. Mediates sensitivity to powdery mildew (e.g. Golovinomyces orontii). Positive regulator of auxin-promoted growth that represses the abscisic acid (ABA) signaling via the activation of ABI2 phosphatase. Required for RALF1-mediated extracellular alkalinization in a signaling pathway preventing cell expansion. The protein is Receptor-like protein kinase FERONIA of Arabidopsis thaliana (Mouse-ear cress).